Here is a 514-residue protein sequence, read N- to C-terminus: Lysine--tRNA ligase (514 aa).

The segment covering 1–13 has biased composition (low complexity); it reads MSKPNNQNQQNNQ. The tract at residues 1–21 is disordered; that stretch reads MSKPNNQNQQNNQEPAPEDAN. 2 residues coordinate Mg(2+): Glu-422 and Glu-429.

The protein belongs to the class-II aminoacyl-tRNA synthetase family. Homodimer. Mg(2+) serves as cofactor.

The protein localises to the cytoplasm. The enzyme catalyses tRNA(Lys) + L-lysine + ATP = L-lysyl-tRNA(Lys) + AMP + diphosphate. This chain is Lysine--tRNA ligase, found in Psychrobacter cryohalolentis (strain ATCC BAA-1226 / DSM 17306 / VKM B-2378 / K5).